A 164-amino-acid chain; its full sequence is Diphosphoinositol polyphosphate phosphohydrolase 3-alpha (164 aa).

Substrate-binding positions include Arg-9, 17-19, and 38-40; these read KKR and SSR. One can recognise a Nudix hydrolase domain in the interval 17–144; sequence KKRAACLCFR…VHAEYLEKLK (128 aa). Mg(2+) is bound by residues Gly-49 and Glu-65. A Nudix box motif is present at residues 50 to 71; it reads GGMEPEEEPGGAAVREVYEEAG. Residue Glu-68 is the Proton acceptor of the active site. Mg(2+) is bound at residue Glu-69. Substrate is bound by residues 89 to 91, Arg-115, and Lys-133; that span reads PKH. Residues 144–164 are disordered; the sequence is KLGGSPTNGNSMAPSSPDSDP. The segment covering 148–164 has biased composition (polar residues); it reads SPTNGNSMAPSSPDSDP.

The protein belongs to the Nudix hydrolase family. DIPP subfamily. It depends on Mg(2+) as a cofactor. Requires Mn(2+) as cofactor. As to expression, mainly expressed in testis and, at lower level in brain. According to PubMed:12121577, it is widely expressed.

It is found in the cytoplasm. It catalyses the reaction diphospho-myo-inositol polyphosphate + H2O = myo-inositol polyphosphate + phosphate.. It carries out the reaction P(1),P(6)-bis(5'-adenosyl) hexaphosphate + H2O = adenosine 5'-pentaphosphate + AMP + 2 H(+). The catalysed reaction is P(1),P(5)-bis(5'-adenosyl) pentaphosphate + H2O = adenosine 5'-tetraphosphate + AMP + 2 H(+). Cleaves a beta-phosphate from the diphosphate groups in PP-InsP5 (diphosphoinositol pentakisphosphate), suggesting that it may play a role in signal transduction. Also able to catalyze the hydrolysis of dinucleoside oligophosphates, with Ap6A and Ap5A being the preferred substrates. The major reaction products are ADP and p4a from Ap6A and ADP and ATP from Ap5A. Also able to hydrolyze 5-phosphoribose 1-diphosphate. The protein is Diphosphoinositol polyphosphate phosphohydrolase 3-alpha (NUDT10) of Homo sapiens (Human).